Reading from the N-terminus, the 129-residue chain is Ribonuclease P protein component (129 aa).

Belongs to the RnpA family. Consists of a catalytic RNA component (M1 or rnpB) and a protein subunit.

It catalyses the reaction Endonucleolytic cleavage of RNA, removing 5'-extranucleotides from tRNA precursor.. In terms of biological role, RNaseP catalyzes the removal of the 5'-leader sequence from pre-tRNA to produce the mature 5'-terminus. It can also cleave other RNA substrates such as 4.5S RNA. The protein component plays an auxiliary but essential role in vivo by binding to the 5'-leader sequence and broadening the substrate specificity of the ribozyme. The polypeptide is Ribonuclease P protein component (Corynebacterium jeikeium (strain K411)).